Reading from the N-terminus, the 326-residue chain is Probable fructokinase-4 (326 aa).

It belongs to the carbohydrate kinase PfkB family.

It carries out the reaction D-fructose + ATP = D-fructose 6-phosphate + ADP + H(+). Its pathway is glycan biosynthesis; starch biosynthesis. May play an important role in maintaining the flux of carbon towards starch formation. The chain is Probable fructokinase-4 from Arabidopsis thaliana (Mouse-ear cress).